A 181-amino-acid chain; its full sequence is Peptidyl-tRNA hydrolase (181 aa).

Tyr-14 lines the tRNA pocket. The active-site Proton acceptor is the His-19. Residues Tyr-62, Asn-64, and Asn-108 each coordinate tRNA.

It belongs to the PTH family. In terms of assembly, monomer.

The protein resides in the cytoplasm. The catalysed reaction is an N-acyl-L-alpha-aminoacyl-tRNA + H2O = an N-acyl-L-amino acid + a tRNA + H(+). Hydrolyzes ribosome-free peptidyl-tRNAs (with 1 or more amino acids incorporated), which drop off the ribosome during protein synthesis, or as a result of ribosome stalling. Its function is as follows. Catalyzes the release of premature peptidyl moieties from peptidyl-tRNA molecules trapped in stalled 50S ribosomal subunits, and thus maintains levels of free tRNAs and 50S ribosomes. This chain is Peptidyl-tRNA hydrolase, found in Campylobacter jejuni (strain RM1221).